The following is a 1032-amino-acid chain: tRNA wybutosine-synthesizing protein 4 (1032 aa).

Residues arginine 69, glycine 95, aspartate 122, 169-170 (DL), and glutamate 196 contribute to the S-adenosyl-L-methionine site. Residues 702-726 (ESVEPNKSQSEKATSKPSAQSQNEP) are disordered. Residues 716–725 (SKPSAQSQNE) show a composition bias toward polar residues. The region spanning 833 to 988 (PTKLPANLAV…AAGRDVYGNR (156 aa)) is the JmjC domain.

The protein belongs to the methyltransferase superfamily. LCMT family.

It catalyses the reaction 7-[(3S)-3-amino-3-carboxypropyl]wyosine(37) in tRNA(Phe) + S-adenosyl-L-methionine = 7-[(3S)-(3-amino-3-methoxycarbonyl)propyl]wyosine(37) in tRNA(Phe) + S-adenosyl-L-homocysteine. It carries out the reaction 7-[(3S)-(3-amino-3-methoxycarbonyl)propyl]wyosine(37) in tRNA(Phe) + S-adenosyl-L-methionine + CO2 = wybutosine(37) in tRNA(Phe) + S-adenosyl-L-homocysteine + 2 H(+). It participates in tRNA modification; wybutosine-tRNA(Phe) biosynthesis. Functionally, probable S-adenosyl-L-methionine-dependent methyltransferase that acts as a component of the wybutosine biosynthesis pathway. Wybutosine is a hyper modified guanosine with a tricyclic base found at the 3'-position adjacent to the anticodon of eukaryotic phenylalanine tRNA. May methylate the carboxyl group of leucine residues to form alpha-leucine ester residues. The protein is tRNA wybutosine-synthesizing protein 4 (ppm2) of Aspergillus oryzae (strain ATCC 42149 / RIB 40) (Yellow koji mold).